A 536-amino-acid polypeptide reads, in one-letter code: Glucose-6-phosphate isomerase (536 aa).

The active-site Proton donor is glutamate 345. Active-site residues include histidine 376 and lysine 505.

It belongs to the GPI family.

It is found in the cytoplasm. The catalysed reaction is alpha-D-glucose 6-phosphate = beta-D-fructose 6-phosphate. The protein operates within carbohydrate biosynthesis; gluconeogenesis. It functions in the pathway carbohydrate degradation; glycolysis; D-glyceraldehyde 3-phosphate and glycerone phosphate from D-glucose: step 2/4. In terms of biological role, catalyzes the reversible isomerization of glucose-6-phosphate to fructose-6-phosphate. The chain is Glucose-6-phosphate isomerase from Ruegeria sp. (strain TM1040) (Silicibacter sp.).